An 84-amino-acid chain; its full sequence is UPF0297 protein Csac_1773 (84 aa).

Belongs to the UPF0297 family.

The chain is UPF0297 protein Csac_1773 from Caldicellulosiruptor saccharolyticus (strain ATCC 43494 / DSM 8903 / Tp8T 6331).